Reading from the N-terminus, the 146-residue chain is Large ribosomal subunit protein uL15 (146 aa).

Residues 1 to 13 show a composition bias toward basic and acidic residues; it reads MKLHELRPAEGSK. A disordered region spans residues 1-54; that stretch reads MKLHELRPAEGSKKAPKRVGRGNGSGLGKTAGKGHKGQNARSGGGVRPGFEGGQ. Gly residues-rich tracts occupy residues 21–31 and 42–52; these read RGNGSGLGKTA and SGGGVRPGFEG.

Belongs to the universal ribosomal protein uL15 family. In terms of assembly, part of the 50S ribosomal subunit.

In terms of biological role, binds to the 23S rRNA. The polypeptide is Large ribosomal subunit protein uL15 (Clostridium novyi (strain NT)).